Here is a 176-residue protein sequence, read N- to C-terminus: CASP-like protein 5A1 (176 aa).

Residues 1 to 35 (MNPSHPAVHPVEAPPTDVHHAPRVRMKDYQGMPGT) lie on the Cytoplasmic side of the membrane. A helical transmembrane segment spans residues 36–56 (LGGLALRLGQFCFAVVAFSIM). The Extracellular portion of the chain corresponds to 57-67 (LSTDDFSTVTA). The chain crosses the membrane as a helical span at residues 68 to 88 (FCYLVAATVLQCLWSLALAVI). Topologically, residues 89-102 (DGYALLVKRSLRNS) are cytoplasmic. The chain crosses the membrane as a helical span at residues 103 to 123 (LVVSLFVVGDGVTATLTFAAA). The Extracellular portion of the chain corresponds to 124-152 (CASAGITVLIGNDLRECDQNHCGKYETAT). Residues 153–173 (AMAFLSWFMVSPSFLLTFWLL) traverse the membrane as a helical segment. Topologically, residues 174-176 (ASR) are cytoplasmic.

It belongs to the Casparian strip membrane proteins (CASP) family. Homodimer and heterodimers.

Its subcellular location is the cell membrane. The polypeptide is CASP-like protein 5A1 (Ginkgo biloba (Ginkgo)).